The sequence spans 91 residues: Transcriptional repressor FrmR (91 aa).

Belongs to the FrmR/RcnR family. As to quaternary structure, homotetramer.

The protein resides in the cytoplasm. Formaldehyde sensor. In the absence of formaldehyde, mediates repression of the frmRAB operon. Acts by binding directly to the frmRAB promoter region. In the presence of formaldehyde, it dissociates from the frmRAB promoter region and allows expression of the formaldehyde detoxification system encoded by frmA and frmB. The chain is Transcriptional repressor FrmR from Escherichia coli (strain UTI89 / UPEC).